Reading from the N-terminus, the 662-residue chain is Glycogen debranching enzyme (662 aa).

Asp338 (nucleophile) is an active-site residue. The Proton donor role is filled by Glu373.

The protein belongs to the glycosyl hydrolase 13 family.

The catalysed reaction is Hydrolysis of (1-&gt;6)-alpha-D-glucosidic linkages to branches with degrees of polymerization of three or four glucose residues in limit dextrin.. Its pathway is glycan degradation; glycogen degradation. Functionally, removes maltotriose and maltotetraose chains that are attached by 1,6-alpha-linkage to the limit dextrin main chain, generating a debranched limit dextrin. In Yersinia pseudotuberculosis serotype IB (strain PB1/+), this protein is Glycogen debranching enzyme.